Reading from the N-terminus, the 312-residue chain is Molybdenum cofactor biosynthesis bifunctional protein (312 aa).

The interval 1-155 (MEFTHLDENG…GGKSSAAEYH (155 aa)) is molybdenum cofactor biosynthesis protein C. Substrate-binding positions include 74–76 (LCH) and 110–111 (ME). The active site involves D125. The tract at residues 156–312 (PRTAILVMSD…FPMLKGDGHA (157 aa)) is molybdenum cofactor biosynthesis protein B.

The protein in the N-terminal section; belongs to the MoaC family. It in the C-terminal section; belongs to the MoaB/Mog family.

It carries out the reaction (8S)-3',8-cyclo-7,8-dihydroguanosine 5'-triphosphate = cyclic pyranopterin phosphate + diphosphate. It functions in the pathway cofactor biosynthesis; molybdopterin biosynthesis. In terms of biological role, catalyzes the conversion of (8S)-3',8-cyclo-7,8-dihydroguanosine 5'-triphosphate to cyclic pyranopterin monophosphate (cPMP). The chain is Molybdenum cofactor biosynthesis bifunctional protein (moaCB) from Chlorobaculum tepidum (strain ATCC 49652 / DSM 12025 / NBRC 103806 / TLS) (Chlorobium tepidum).